A 294-amino-acid polypeptide reads, in one-letter code: ATP synthase gamma chain (294 aa).

It belongs to the ATPase gamma chain family. F-type ATPases have 2 components, CF(1) - the catalytic core - and CF(0) - the membrane proton channel. CF(1) has five subunits: alpha(3), beta(3), gamma(1), delta(1), epsilon(1). CF(0) has three main subunits: a, b and c.

The protein localises to the cell inner membrane. Produces ATP from ADP in the presence of a proton gradient across the membrane. The gamma chain is believed to be important in regulating ATPase activity and the flow of protons through the CF(0) complex. This Campylobacter jejuni subsp. jejuni serotype O:23/36 (strain 81-176) protein is ATP synthase gamma chain.